Reading from the N-terminus, the 109-residue chain is Thioredoxin (109 aa).

Residues 2 to 109 enclose the Thioredoxin domain; it reads TNCIVELTDG…LKDFLNLYLK (108 aa). A disulfide bond links Cys33 and Cys36.

This sequence belongs to the thioredoxin family.

Participates in various redox reactions through the reversible oxidation of its active center dithiol to a disulfide and catalyzes dithiol-disulfide exchange reactions. This chain is Thioredoxin (trxA), found in Buchnera aphidicola subsp. Baizongia pistaciae (strain Bp).